Here is a 287-residue protein sequence, read N- to C-terminus: Cyclopropane mycolic acid synthase MmaA2 (287 aa).

Residues 33-34 (YS), 72-74 (GCG), 94-99 (TLSKNQ), 123-124 (WE), and isoleucine 136 each bind S-adenosyl-L-methionine. Residue cysteine 269 is part of the active site.

It belongs to the CFA/CMAS family.

It catalyses the reaction a 1-acyl-2-(9Z)-enoyl-sn-glycero-3-phospholipid + S-adenosyl-L-methionine = a 1-acyl-2-(9-cyclopronane)-acyl-sn-glycero-3-phospholipid + S-adenosyl-L-homocysteine + H(+). It functions in the pathway lipid metabolism; mycolic acid biosynthesis. Functionally, catalyzes the conversion of a double bond to a cis cyclopropane ring at the distal position of an alpha mycolic acid via the transfer of a methylene group from S-adenosyl-L-methionine. MmaA2 also catalyzes the biosynthesis of the cis-cyclopropanated methoxymycolates. Cyclopropanated mycolic acids are key factors participating in cell envelope permeability, host immunomodulation and persistence. The sequence is that of Cyclopropane mycolic acid synthase MmaA2 (mmaA2) from Mycobacterium tuberculosis (strain ATCC 25177 / H37Ra).